The sequence spans 1627 residues: DNA topoisomerase 2-beta (1627 aa).

Residues asparagine 117, asparagine 146, 174-176 (SSN), and 187-194 (GRNGYGAK) each bind ATP. An interaction with DNA region spans residues 368 to 370 (KKK). An ATP-binding site is contributed by 402 to 404 (QTK). The Toprim domain maps to 481 to 598 (CTLILTEGDS…SLLKHGFLEE (118 aa)). The Mg(2+) site is built by glutamate 487, aspartate 567, and aspartate 569. A Topo IIA-type catalytic domain is found at 741-1194 (IPSLVDGLKP…SASDLWKEDL (454 aa)). The active-site O-(5'-phospho-DNA)-tyrosine intermediate is tyrosine 831. The segment at 1016-1025 (KLQTSLTCNS) is interaction with DNA. Disordered stretches follow at residues 1115 to 1144 (AWKE…GSTS), 1224 to 1248 (KVGK…RRIV), 1283 to 1365 (EFGG…DSLL), and 1378 to 1627 (DFSK…DMFN). A compositionally biased stretch (low complexity) spans 1131-1144 (NANDDASSASGSTS). Positions 1296–1305 (TVNTAASGTK) are enriched in polar residues. The span at 1339-1349 (PWSDDESKSES) shows a compositional bias: basic and acidic residues. Composition is skewed to acidic residues over residues 1381 to 1392 (KEEDDAHDDDDA) and 1412 to 1428 (REDE…DEYD). 2 stretches are compositionally biased toward basic and acidic residues: residues 1436-1448 (PSPE…KKNQ) and 1462-1471 (KTDDDTTKLD). Composition is skewed to basic residues over residues 1542–1552 (GKGRGAKKRKT) and 1566–1578 (KAPK…KSKK). Positions 1616–1627 (ESDEDDDFDMFN) are enriched in acidic residues.

It belongs to the type II topoisomerase family. Homodimer. Requires Mg(2+) as cofactor. Mn(2+) is required as a cofactor. It depends on Ca(2+) as a cofactor.

Its subcellular location is the nucleus. The protein resides in the nucleolus. The protein localises to the nucleoplasm. It carries out the reaction ATP-dependent breakage, passage and rejoining of double-stranded DNA.. In terms of biological role, key decatenating enzyme that alters DNA topology by binding to two double-stranded DNA molecules, generating a double-stranded break in one of the strands, passing the intact strand through the broken strand, and religating the broken strand. Plays a role in B-cell differentiation. The protein is DNA topoisomerase 2-beta (TOP2B) of Gallus gallus (Chicken).